A 2131-amino-acid chain; its full sequence is Beta/gamma crystallin domain-containing protein 1 (2131 aa).

Disordered stretches follow at residues 1-53 (MPLS…LPAP), 104-370 (KSRA…KGHA), 385-674 (TEGA…PVHK), 688-707 (RTNSSPRHTDIRGQRNTPAS), and 723-743 (AKEMEQPEKKVMPNSPQNGVL). Residues 19 to 35 (PPKKHTTFHLWRSKKKQ) show a composition bias toward basic residues. Residues 135 to 147 (RNGLESPTRSNAK) show a composition bias toward polar residues. Composition is skewed to basic and acidic residues over residues 160 to 169 (LPERESERSR) and 184 to 194 (GSPRENPREAE). Residues 248 to 265 (ATTTAKQLHSSPGNSSRQ) are compositionally biased toward polar residues. Basic residues predominate over residues 414–424 (SGRRSGRRRGS). Positions 479–490 (ASAASPESKPSP) are enriched in low complexity. 2 positions are modified to phosphoserine: serine 483 and serine 489. 2 stretches are compositionally biased toward basic and acidic residues: residues 536–546 (PAKESPPKRVP) and 562–572 (EAARAIPRELP). A compositionally biased stretch (low complexity) spans 609 to 619 (RAAGAPGASDA). Residues 723 to 733 (AKEMEQPEKKV) are compositionally biased toward basic and acidic residues. 2 positions are modified to phosphoserine: serine 737 and serine 756. 2 disordered regions span residues 758–791 (EEILPATRGMNGDSSENQALGPQPNQDDKADVQT) and 837–889 (DIPT…KDTC). A compositionally biased stretch (polar residues) spans 769-782 (GDSSENQALGPQPN). Over residues 864-881 (SPAESSPGPSLSLSAPAP) the composition is skewed to low complexity. Serine 892 carries the phosphoserine modification. 4 disordered regions span residues 926–947 (LELGGETTPPLSTERSPEAVGS), 1041–1101 (QAQS…VFDS), 1271–1302 (STSQNGSLSQSSVSQPTTEGAPPCGLNKEQSN), and 1316–1348 (SSSTSHSSLKSPSHMEKYPQKEKTKEDLDSRSN). Threonine 933 is subject to Phosphothreonine. Polar residues predominate over residues 1055–1089 (SSPTNSPSSGNHLATPQRPDQTVTNGQDSPASLLN). Low complexity-rich tracts occupy residues 1091–1101 (SAGSDDSVFDS), 1271–1288 (STSQNGSLSQSSVSQPTT), and 1316–1327 (SSSTSHSSLKSP). Residues 1328–1348 (SHMEKYPQKEKTKEDLDSRSN) show a composition bias toward basic and acidic residues. 12 consecutive Beta/gamma crystallin 'Greek key' domains span residues 1430 to 1469 (GKVVIYSEPDVSEKCIEVFSDIQDCSSWSLSPVILIKVVR), 1470 to 1525 (GCWI…RHVV), 1531 to 1571 (SHID…KVHW), 1572 to 1614 (GTWL…RPLK), 1626 to 1678 (PKVV…KVLR), 1679 to 1721 (GIWV…RPIL), 1727 to 1769 (AHMI…NVLS), 1770 to 1812 (GVWV…QPIC), 1823 to 1860 (NQIHLFSEPQFQGHSQSFEETTSQIDDSFSTKSCRVSG), 1861 to 1904 (GSWV…RFID), 1910 to 1950 (PTII…QVIG), and 1951 to 1992 (GIWV…RPFV). The 134-residue stretch at 1994 to 2127 (KRIYFRLRNK…EKFTQVWEAM (134 aa)) folds into the Ricin B-type lectin domain.

The protein belongs to the beta/gamma-crystallin family.

Its function is as follows. May function as suppressor of malignant melanoma. It may exert its effects through interactions with the cytoskeleton. This Homo sapiens (Human) protein is Beta/gamma crystallin domain-containing protein 1.